The following is a 101-amino-acid chain: Small ribosomal subunit protein bS18c (101 aa).

Belongs to the bacterial ribosomal protein bS18 family. In terms of assembly, part of the 30S ribosomal subunit.

It localises to the plastid. The protein resides in the chloroplast. The protein is Small ribosomal subunit protein bS18c of Oenothera biennis (German evening primrose).